The sequence spans 236 residues: Small ribosomal subunit protein uS2c (236 aa).

The protein belongs to the universal ribosomal protein uS2 family.

It localises to the plastid. The protein resides in the chloroplast. In Triticum aestivum (Wheat), this protein is Small ribosomal subunit protein uS2c (rps2).